The primary structure comprises 137 residues: Cell division protein SepF (137 aa).

Belongs to the SepF family. In terms of assembly, homodimer. Interacts with FtsZ.

Its subcellular location is the cytoplasm. Its function is as follows. Cell division protein that is part of the divisome complex and is recruited early to the Z-ring. Probably stimulates Z-ring formation, perhaps through the cross-linking of FtsZ protofilaments. Its function overlaps with FtsA. The sequence is that of Cell division protein SepF from Carboxydothermus hydrogenoformans (strain ATCC BAA-161 / DSM 6008 / Z-2901).